Consider the following 1794-residue polypeptide: Non-reducing polyketide synthase nscA (1794 aa).

Positions 19–256 (DLKDLFRRLH…PLPVYDGLCH (238 aa)) are N-terminal acylcarrier protein transacylase domain (SAT). Residues 389-822 (ASKLAIVGMA…GGNTTVLLED (434 aa)) form the Ketosynthase family 3 (KS3) domain. Basic and acidic residues predominate over residues 428-440 (DRFDLNTHYDPTG). The tract at residues 428-448 (DRFDLNTHYDPTGKTENATQT) is disordered. Residues cysteine 562, histidine 697, and histidine 740 each act as for beta-ketoacyl synthase activity in the active site. The segment at 927–1230 (TFTGQGAYYS…SVISSCRRNE (304 aa)) is malonyl-CoA:ACP transacylase (MAT) domain. Residues 1314–1633 (TSLVHQITTE…RLLMDRFFSP (320 aa)) form a product template (PT) domain region. The segment at 1318–1454 (HQITTETVEA…CVVRFEDPAA (137 aa)) is N-terminal hotdog fold. The region spanning 1318–1628 (HQITTETVEA…FRRVPRLLMD (311 aa)) is the PKS/mFAS DH domain. Catalysis depends on histidine 1350, which acts as the Proton acceptor; for dehydratase activity. The tract at residues 1482–1628 (ASKLSKPLAY…FRRVPRLLMD (147 aa)) is C-terminal hotdog fold. The active-site Proton donor; for dehydratase activity is aspartate 1539. The disordered stretch occupies residues 1637 to 1719 (SHTEKQLQET…ATSDRGDSTD (83 aa)). Residues 1644-1655 (QETAPSATNVKK) are compositionally biased toward polar residues. In terms of domain architecture, Carrier spans 1717-1794 (STDAGVVGQC…EMTAWLEEYC (78 aa)). Serine 1754 bears the O-(pantetheine 4'-phosphoryl)serine mark.

Requires pantetheine 4'-phosphate as cofactor.

The protein operates within secondary metabolite biosynthesis. Functionally, non-reducing polyketide synthase; part of the gene cluster that mediates the biosynthesis of neosartoricin, a prenylated anthracenone that exhibits T-cell antiproliferative activity, suggestive of a physiological role as an immunosuppressive agent. The non-reducing polyketide synthase nscA probably synthesizes and cyclizes the decaketide backbone. The hydrolase nscB then mediates the product release through hydrolysis followed by spontaneous decarboxylation. The prenyltransferase nscD catalyzes the addition of the dimethylallyl group to the aromatic C5. The FAD-dependent monooxygenase nscC is then responsible for the stereospecific hydroxylation at C2. There is no gene encoding O-acetyltransferase in the nsc gene cluster; thus, the last step of 2-O-acetylation leading to neosartoricin may be catalyzed by an unidentified O-acetyltransferase. This chain is Non-reducing polyketide synthase nscA, found in Aspergillus fumigatus (strain ATCC MYA-4609 / CBS 101355 / FGSC A1100 / Af293) (Neosartorya fumigata).